Reading from the N-terminus, the 653-residue chain is E3 ubiquitin-protein ligase TRIM32 (653 aa).

Ala-2 is modified (N-acetylalanine). Residues 20-65 (CPICMESFTEEQLRPKLLHCGHTICRQCLEKLLASSINGVRCPFCS) form an RING-type zinc finger. Ser-55 is subject to Phosphoserine; by CHEK2. Cys-100, Cys-103, Cys-123, and His-128 together coordinate Zn(2+). A B box-type zinc finger spans residues 103–133 (CGRRLPRQFCRSCGLVLCEPCREADHQPPGH). Residues 138-197 (VKEAAEERRRDFGEKLTRLRELMGELQRRKAALEGVSKDLQARYKAVLQEYGHEERRVQD) are a coiled coil. Phosphoserine occurs at positions 328, 335, and 339. NHL repeat units follow at residues 358-401 (LKKM…FTRK), 415-458 (DSFV…YTLD), 459-499 (GHCV…FTVD), 562-605 (GRQI…FPKG), and 606-646 (GGYS…YSYH).

The protein belongs to the TRIM/RBCC family. It self-associates. Interacts with DTNBP1. Interacts with PIAS4/PIASY upon treatment with UVB and TNF-alpha. Interacts with AMBRA1; promoting activation of ULK1 through unanchored 'Lys-63'-linked polyubiquitin chains. Interacts with TICAM1 and TAX1BP1; these interactions target TICAM1 to TAX1BP1-mediated selective autophagic degradation. In terms of assembly, (Microbial infection) Interacts with S.typhimurium protein SseK3; SseK3 does not glycosylate TRIM32. Ubiquitinated. Post-translationally, phosphorylation at Ser-55 by CHEK2 under oxidative stress, activates the E3 ligase activity and promotes ATG7 ubiquitination leading to positive regulation of the autophagosme assembly. In terms of tissue distribution, spleen, thymus, prostate, testis, ovary, intestine, colon and skeletal muscle.

It localises to the cytoplasm. Its subcellular location is the mitochondrion. The protein resides in the endoplasmic reticulum. It catalyses the reaction S-ubiquitinyl-[E2 ubiquitin-conjugating enzyme]-L-cysteine + [acceptor protein]-L-lysine = [E2 ubiquitin-conjugating enzyme]-L-cysteine + N(6)-ubiquitinyl-[acceptor protein]-L-lysine.. It participates in protein modification; protein ubiquitination. Its function is as follows. E3 ubiquitin ligase that plays a role in various biological processes including neural stem cell differentiation, innate immunity, inflammatory resonse and autophagy. Plays a role in virus-triggered induction of IFN-beta and TNF-alpha by mediating the ubiquitination of STING1. Mechanistically, targets STING1 for 'Lys-63'-linked ubiquitination which promotes the interaction of STING1 with TBK1. Regulates bacterial clearance and promotes autophagy in Mycobacterium tuberculosis-infected macrophages. Negatively regulates TLR3/4-mediated innate immune and inflammatory response by triggering the autophagic degradation of TICAM1 in an E3 activity-independent manner. Plays an essential role in oxidative stress induced cell death by inducing loss of transmembrane potential and enhancing mitochondrial reactive oxygen species (ROS) production during oxidative stress conditions. Ubiquitinates XIAP and targets it for proteasomal degradation. Ubiquitinates DTNBP1 (dysbindin) and promotes its degradation. May ubiquitinate BBS2. Ubiquitinates PIAS4/PIASY and promotes its degradation in keratinocytes treated with UVB and TNF-alpha. Also acts as a regulator of autophagy by mediating formation of unanchored 'Lys-63'-linked polyubiquitin chains that activate ULK1: interaction with AMBRA1 is required for ULK1 activation. Positively regulates dendritic branching by promoting ubiquitination and subsequent degradation of the epigenetic factor CDYL. Under metabolic stress and phosphorylation by CHK2, mediates 'Lys-63'-linked ubiquitination of ATG7 at 'Lys-45' to initiate autophagy. In terms of biological role, (Microbial infection) May play a significant role in mediating the biological activity of the HIV-1 Tat protein in vivo. Binds specifically to the activation domain of HIV-1 Tat and can also interact with the HIV-2 and EIAV Tat proteins in vivo. This chain is E3 ubiquitin-protein ligase TRIM32, found in Homo sapiens (Human).